Here is a 440-residue protein sequence, read N- to C-terminus: ATP-dependent protease ATPase subunit HslU (440 aa).

Residues Ile-18, 60–65, Asp-252, Glu-318, and Arg-390 each bind ATP; that span reads GVGKTE.

This sequence belongs to the ClpX chaperone family. HslU subfamily. In terms of assembly, a double ring-shaped homohexamer of HslV is capped on each side by a ring-shaped HslU homohexamer. The assembly of the HslU/HslV complex is dependent on binding of ATP.

The protein localises to the cytoplasm. ATPase subunit of a proteasome-like degradation complex; this subunit has chaperone activity. The binding of ATP and its subsequent hydrolysis by HslU are essential for unfolding of protein substrates subsequently hydrolyzed by HslV. HslU recognizes the N-terminal part of its protein substrates and unfolds these before they are guided to HslV for hydrolysis. The chain is ATP-dependent protease ATPase subunit HslU from Acidithiobacillus ferrooxidans (strain ATCC 23270 / DSM 14882 / CIP 104768 / NCIMB 8455) (Ferrobacillus ferrooxidans (strain ATCC 23270)).